The sequence spans 207 residues: Large ribosomal subunit protein uL4 (207 aa).

The segment at 47-78 (GTASSKTRAEVRGGGKKPWRQKGTGRARVGSS) is disordered. Positions 60 to 71 (GGKKPWRQKGTG) are enriched in basic residues.

This sequence belongs to the universal ribosomal protein uL4 family. Part of the 50S ribosomal subunit.

One of the primary rRNA binding proteins, this protein initially binds near the 5'-end of the 23S rRNA. It is important during the early stages of 50S assembly. It makes multiple contacts with different domains of the 23S rRNA in the assembled 50S subunit and ribosome. In terms of biological role, forms part of the polypeptide exit tunnel. This Syntrophomonas wolfei subsp. wolfei (strain DSM 2245B / Goettingen) protein is Large ribosomal subunit protein uL4.